The following is a 115-amino-acid chain: DNA-directed RNA polymerase subunit Rpo4 (115 aa).

It belongs to the eukaryotic RPB4 RNA polymerase subunit family. Part of the RNA polymerase complex. Forms a stalk with Rpo7 that extends from the main structure.

The protein resides in the cytoplasm. It catalyses the reaction RNA(n) + a ribonucleoside 5'-triphosphate = RNA(n+1) + diphosphate. Functionally, DNA-dependent RNA polymerase (RNAP) catalyzes the transcription of DNA into RNA using the four ribonucleoside triphosphates as substrates. This subunit is less well bound than the others. The sequence is that of DNA-directed RNA polymerase subunit Rpo4 from Methanocaldococcus jannaschii (strain ATCC 43067 / DSM 2661 / JAL-1 / JCM 10045 / NBRC 100440) (Methanococcus jannaschii).